The following is a 72-amino-acid chain: Prokaryotic ubiquitin-like protein Pup (72 aa).

The segment covering 1 to 11 (MAQRDTGGGQQ) has biased composition (gly residues). The segment at 1–41 (MAQRDTGGGQQRTGRRDDETAEAEVEESGASDLKERHEKLS) is disordered. Residues 19-29 (ETAEAEVEESG) show a composition bias toward acidic residues. The stretch at 22-61 (EAEVEESGASDLKERHEKLSEDVDSLLDEIDDVLEENAEE) forms a coiled coil. The ARC ATPase binding stretch occupies residues 28–66 (SGASDLKERHEKLSEDVDSLLDEIDDVLEENAEEFVKGY). The segment covering 32–41 (DLKERHEKLS) has biased composition (basic and acidic residues). The residue at position 72 (Gln72) is a Deamidated glutamine. Gln72 is covalently cross-linked (Isoglutamyl lysine isopeptide (Gln-Lys) (interchain with K-? in acceptor proteins)).

Belongs to the prokaryotic ubiquitin-like protein family. As to quaternary structure, strongly interacts with the proteasome-associated ATPase ARC through a hydrophobic interface; the interacting region of Pup lies in its C-terminal half. There is one Pup binding site per ARC hexamer ring. In terms of processing, is modified by deamidation of its C-terminal glutamine to glutamate by the deamidase Dop, a prerequisite to the subsequent pupylation process.

Its pathway is protein degradation; proteasomal Pup-dependent pathway. In terms of biological role, protein modifier that is covalently attached to lysine residues of substrate proteins, thereby targeting them for proteasomal degradation. The tagging system is termed pupylation. This is Prokaryotic ubiquitin-like protein Pup from Parafrankia sp. (strain EAN1pec).